A 275-amino-acid chain; its full sequence is Tryptophan synthase alpha chain (275 aa).

Catalysis depends on proton acceptor residues glutamate 51 and glutamate 62.

Belongs to the TrpA family. In terms of assembly, tetramer of two alpha and two beta chains.

It carries out the reaction (1S,2R)-1-C-(indol-3-yl)glycerol 3-phosphate + L-serine = D-glyceraldehyde 3-phosphate + L-tryptophan + H2O. The protein operates within amino-acid biosynthesis; L-tryptophan biosynthesis; L-tryptophan from chorismate: step 5/5. Its function is as follows. The alpha subunit is responsible for the aldol cleavage of indoleglycerol phosphate to indole and glyceraldehyde 3-phosphate. The sequence is that of Tryptophan synthase alpha chain from Caulobacter sp. (strain K31).